Consider the following 222-residue polypeptide: Thymidylate kinase (222 aa).

Residue G10 to S17 participates in ATP binding.

It belongs to the thymidylate kinase family.

The enzyme catalyses dTMP + ATP = dTDP + ADP. Its function is as follows. Phosphorylation of dTMP to form dTDP in both de novo and salvage pathways of dTTP synthesis. This Alteromonas mediterranea (strain DSM 17117 / CIP 110805 / LMG 28347 / Deep ecotype) protein is Thymidylate kinase.